Here is a 347-residue protein sequence, read N- to C-terminus: MIYVGGVQFLDESSSFSLSSSSQGSSLLVDVMSHPVITLASDSFKNLEEKNVSFDESDSESSTKDRYVYIFQREFAVVNPALVDFVGTDEATTCVGLVIRNRKSGMTSVAHMDSPEIVDLGISQMLLLVLQDDVDAELDVHMVGGYEDVDIKNADGVGDYAKPEGYSFPLCCKLVETLQKRRENFHIQTLFILGHNTKLDSQANTCPIFNGCLVNTSTGAILPASFNRTSRCPDEIVRRIRVSSSFEDSSWKGKLLDTYDTKTDRFIIAPCRWTMRLIEYVWELNQLTDEEILTNCSTSPSAEGPDFVNSLRRNWGYLLKYPEWSKTFPRRQPRVFERTVDGHWKKC.

The catalysed reaction is N-terminal L-asparaginyl-[protein] + H2O + H(+) = N-terminal L-aspartyl-[protein] + NH4(+). N-terminal asparagine deamidase that mediates deamidation of N-terminal asparagine residues to aspartate. Required for the ubiquitin-dependent turnover of intracellular proteins that initiate with Met-Asn. These proteins are acetylated on the retained initiator methionine and can subsequently be modified by the removal of N-acetyl methionine by acylaminoacid hydrolase (AAH). Conversion of the resulting N-terminal asparagine to aspartate by NTAN1 renders the protein susceptible to arginylation, polyubiquitination and degradation as specified by the N-end rule. This enzyme does not act on substrates with internal or C-terminal asparagines and does not act on glutamine residues in any position. Does not seem to be involved in immune response, unlike the N-terminal glutamine amidohydrolase NTAQ1. In Arabidopsis thaliana (Mouse-ear cress), this protein is Protein N-terminal asparagine amidohydrolase.